Consider the following 426-residue polypeptide: Protein arginine methyltransferase NDUFAF7 homolog, mitochondrial (426 aa).

It belongs to the NDUFAF7 family.

It localises to the mitochondrion. The enzyme catalyses L-arginyl-[protein] + 2 S-adenosyl-L-methionine = N(omega),N(omega)'-dimethyl-L-arginyl-[protein] + 2 S-adenosyl-L-homocysteine + 2 H(+). Arginine methyltransferase involved in the assembly or stability of mitochondrial NADH:ubiquinone oxidoreductase complex (complex I). The protein is Protein arginine methyltransferase NDUFAF7 homolog, mitochondrial of Caenorhabditis elegans.